The following is a 560-amino-acid chain: Embryonal Fyn-associated substrate (560 aa).

The region spanning 5-68 is the SH3 domain; it reads TSAQLARALY…PANRVKLLPA (64 aa). 2 disordered regions span residues 176 to 219 and 241 to 372; these read VVPQ…LYAA and ANGE…NEYE. Basic and acidic residues predominate over residues 198–210; sequence AELERDPEWEGGR. A Phosphotyrosine; by SRC modification is found at tyrosine 253. Positions 259 to 268 are enriched in pro residues; it reads GPEPPSPEPP. 2 consecutive short sequence motifs (SH3-binding) follow at residues 304–310 and 334–340; these read RPLPALP and RPLPPPP. The segment covering 305–315 has biased composition (low complexity); it reads PLPALPVSEAP. Over residues 351-361 the composition is skewed to basic and acidic residues; that stretch reads PEGDPECREVA. The divergent helix-loop-helix motif stretch occupies residues 437-487; the sequence is FYAGQCQSHYSALQAAVAALVASTQANQPPCLFVPHGKRVVVAAHRLVFVG.

It belongs to the CAS family. In terms of processing, phosphorylated on multiple tyrosine residues. Phosphorylated on tyrosines by FYN and SRC. As to expression, widely expressed. Higher levels found in placenta and embryo. Lower levels found in brain, brainstem, muscle and lung. No expression in liver and intestine.

In terms of biological role, docking protein which plays a central coordinating role for tyrosine-kinase-based signaling related to cell adhesion. May serve as an activator of SRC and a downstream effector. Interacts with the SH3 domain of FYN and with CRK, SRC, and YES. This Mus musculus (Mouse) protein is Embryonal Fyn-associated substrate (Efs).